Here is a 435-residue protein sequence, read N- to C-terminus: MAMAGGGRGDYGAFMERFVLPPPPSQQLPLHGLTFAIKDIFDIAGRVTGFGNPDWARTHAPAAATSPVVLAALAAGATSLGTTIMDEMAYSINGENTHYGTPTNPCAPGRVPGGSSSGSAVAVAANLVDFSLGTDTGGSVRVPAAYCGIFGLRPSHGLVSAENVIPMAQMFDTVGWFSRDLSTLSRVTKVLLPLPDDIVKQPTQVTIPMDCFQILGSLDDRTYQIINASVAKRFDSQILDNRNLGDFISDNVPSIGKFITDFSESELPSVPALSVISHVMRGLQRSQFKANHAEWVNTVKPNLGPGLRERILEAIASGDNESLEDFQAIRAEFKSALAALLKDHGILAIPTVPGPPPKVGMEAAPLENFRARAFSLLSIAGLSGFCQVSIPLGMRNGLPVSVSLVARHGADHFLLNVVEELYQTLIDEATKTWSS.

Catalysis depends on charge relay system residues Lys38 and Ser115. Residue Ser139 is the Acyl-ester intermediate of the active site.

Belongs to the amidase family.

The protein resides in the cytoplasm. Its subcellular location is the nucleus. It localises to the nucleoplasm. It carries out the reaction a monocarboxylic acid amide + H2O = a monocarboxylate + NH4(+). Amidase involved in auxin biosynthesis. Converts indole-3-acetamide (IAM) to indole-3-acetate, and phenyl-2-acetamide (PAM) to phenyl-2-acetate. Substrate preference is PAM &gt; IAM. The sequence is that of Amidase 1 from Oryza sativa subsp. japonica (Rice).